The sequence spans 261 residues: Cytochrome c oxidase subunit 3 (261 aa).

Over 1-15 (MAHQAHAYHMVDPSP) the chain is Mitochondrial matrix. A helical membrane pass occupies residues 16–34 (WPLTGAVAALLMSSGLAIW). Over 35–40 (FHLHSM) the chain is Mitochondrial intermembrane. The chain crosses the membrane as a helical span at residues 41-66 (TLIVLGMILLILTMIQWWRDIIREGT). Residues 67-72 (FQGHHT) are Mitochondrial matrix-facing. The chain crosses the membrane as a helical span at residues 73 to 105 (PPVQKGLRYGMILFITSEVFFFLGFFWAFYHSS). Residues 106–128 (LAPTPELGGCWPPTGLTTLDPFE) are Mitochondrial intermembrane-facing. A helical membrane pass occupies residues 129–152 (VPLLNTAVLLASGVTVTWAHHSLM). The Mitochondrial matrix segment spans residues 153–155 (EGE). Residues 156 to 183 (RKQAIQSLALTILLGLYFTALQAMEYYE) form a helical membrane-spanning segment. At 184–190 (APFTIAD) the chain is on the mitochondrial intermembrane side. The helical transmembrane segment at 191 to 223 (GVYGSTFFVATGFHGLHVIIGSTFLAVCLLRQV) threads the bilayer. The Mitochondrial matrix portion of the chain corresponds to 224–232 (LFHFTSDHH). Residues 233–256 (FGFEAAAWYWHFVDVVWLFLYVSI) traverse the membrane as a helical segment. Residues 257-261 (YWWGS) lie on the Mitochondrial intermembrane side of the membrane.

This sequence belongs to the cytochrome c oxidase subunit 3 family. In terms of assembly, component of the cytochrome c oxidase (complex IV, CIV), a multisubunit enzyme composed of 14 subunits. The complex is composed of a catalytic core of 3 subunits MT-CO1, MT-CO2 and MT-CO3, encoded in the mitochondrial DNA, and 11 supernumerary subunits COX4I, COX5A, COX5B, COX6A, COX6B, COX6C, COX7A, COX7B, COX7C, COX8 and NDUFA4, which are encoded in the nuclear genome. The complex exists as a monomer or a dimer and forms supercomplexes (SCs) in the inner mitochondrial membrane with NADH-ubiquinone oxidoreductase (complex I, CI) and ubiquinol-cytochrome c oxidoreductase (cytochrome b-c1 complex, complex III, CIII), resulting in different assemblies (supercomplex SCI(1)III(2)IV(1) and megacomplex MCI(2)III(2)IV(2)).

It is found in the mitochondrion inner membrane. The enzyme catalyses 4 Fe(II)-[cytochrome c] + O2 + 8 H(+)(in) = 4 Fe(III)-[cytochrome c] + 2 H2O + 4 H(+)(out). Its function is as follows. Component of the cytochrome c oxidase, the last enzyme in the mitochondrial electron transport chain which drives oxidative phosphorylation. The respiratory chain contains 3 multisubunit complexes succinate dehydrogenase (complex II, CII), ubiquinol-cytochrome c oxidoreductase (cytochrome b-c1 complex, complex III, CIII) and cytochrome c oxidase (complex IV, CIV), that cooperate to transfer electrons derived from NADH and succinate to molecular oxygen, creating an electrochemical gradient over the inner membrane that drives transmembrane transport and the ATP synthase. Cytochrome c oxidase is the component of the respiratory chain that catalyzes the reduction of oxygen to water. Electrons originating from reduced cytochrome c in the intermembrane space (IMS) are transferred via the dinuclear copper A center (CU(A)) of subunit 2 and heme A of subunit 1 to the active site in subunit 1, a binuclear center (BNC) formed by heme A3 and copper B (CU(B)). The BNC reduces molecular oxygen to 2 water molecules using 4 electrons from cytochrome c in the IMS and 4 protons from the mitochondrial matrix. The polypeptide is Cytochrome c oxidase subunit 3 (mt-co3) (Danio rerio (Zebrafish)).